The sequence spans 174 residues: Large ribosomal subunit protein uL18 (174 aa).

Belongs to the universal ribosomal protein uL18 family. In terms of assembly, part of the 50S ribosomal subunit. Contacts the 5S and 23S rRNAs.

This is one of the proteins that bind and probably mediate the attachment of the 5S RNA into the large ribosomal subunit, where it forms part of the central protuberance. The protein is Large ribosomal subunit protein uL18 of Methanosarcina mazei (strain ATCC BAA-159 / DSM 3647 / Goe1 / Go1 / JCM 11833 / OCM 88) (Methanosarcina frisia).